The following is a 345-amino-acid chain: Protein RecA (345 aa).

Residue 81–88 (GPESSGKT) coordinates ATP.

Belongs to the RecA family.

The protein localises to the cytoplasm. Functionally, can catalyze the hydrolysis of ATP in the presence of single-stranded DNA, the ATP-dependent uptake of single-stranded DNA by duplex DNA, and the ATP-dependent hybridization of homologous single-stranded DNAs. It interacts with LexA causing its activation and leading to its autocatalytic cleavage. This is Protein RecA from Mycoplasma mycoides.